The following is an 850-amino-acid chain: Elongation factor 2 (850 aa).

The tr-type G domain maps to Lys-17–Leu-351. Residues Ala-26–Ser-33, Asn-159–Asp-162, and Ser-213–Leu-215 each bind GTP. Position 707 is a diphthamide (His-707).

It belongs to the TRAFAC class translation factor GTPase superfamily. Classic translation factor GTPase family. EF-G/EF-2 subfamily.

It is found in the cytoplasm. It carries out the reaction GTP + H2O = GDP + phosphate + H(+). The protein operates within protein biosynthesis; polypeptide chain elongation. Catalyzes the GTP-dependent ribosomal translocation step during translation elongation. During this step, the ribosome changes from the pre-translocational (PRE) to the post-translocational (POST) state as the newly formed A-site-bound peptidyl-tRNA and P-site-bound deacylated tRNA move to the P and E sites, respectively. Catalyzes the coordinated movement of the two tRNA molecules, the mRNA and conformational changes in the ribosome. The polypeptide is Elongation factor 2 (EFT1) (Encephalitozoon cuniculi (strain GB-M1) (Microsporidian parasite)).